The following is a 266-amino-acid chain: 3-methyl-2-oxobutanoate hydroxymethyltransferase (266 aa).

Positions 45 and 84 each coordinate Mg(2+). 3-methyl-2-oxobutanoate is bound by residues 45–46 (DS), Asp-84, and Lys-112. Residue Glu-114 coordinates Mg(2+). Glu-181 functions as the Proton acceptor in the catalytic mechanism.

It belongs to the PanB family. As to quaternary structure, homodecamer; pentamer of dimers. Mg(2+) serves as cofactor.

It is found in the cytoplasm. The catalysed reaction is 3-methyl-2-oxobutanoate + (6R)-5,10-methylene-5,6,7,8-tetrahydrofolate + H2O = 2-dehydropantoate + (6S)-5,6,7,8-tetrahydrofolate. The protein operates within cofactor biosynthesis; (R)-pantothenate biosynthesis; (R)-pantoate from 3-methyl-2-oxobutanoate: step 1/2. Catalyzes the reversible reaction in which hydroxymethyl group from 5,10-methylenetetrahydrofolate is transferred onto alpha-ketoisovalerate to form ketopantoate. The polypeptide is 3-methyl-2-oxobutanoate hydroxymethyltransferase (Stutzerimonas stutzeri (strain A1501) (Pseudomonas stutzeri)).